We begin with the raw amino-acid sequence, 360 residues long: Phenylalanine--tRNA ligase alpha subunit (360 aa).

Glutamate 260 is a Mg(2+) binding site.

It belongs to the class-II aminoacyl-tRNA synthetase family. Phe-tRNA synthetase alpha subunit type 1 subfamily. As to quaternary structure, tetramer of two alpha and two beta subunits. Mg(2+) is required as a cofactor.

It localises to the cytoplasm. It carries out the reaction tRNA(Phe) + L-phenylalanine + ATP = L-phenylalanyl-tRNA(Phe) + AMP + diphosphate + H(+). The polypeptide is Phenylalanine--tRNA ligase alpha subunit (Afipia carboxidovorans (strain ATCC 49405 / DSM 1227 / KCTC 32145 / OM5) (Oligotropha carboxidovorans)).